Reading from the N-terminus, the 533-residue chain is NAD(P)H-quinone oxidoreductase chain 4 (533 aa).

The next 15 helical transmembrane spans lie at 5-25 (VPWL…VPLV), 36-56 (WYAL…YLTG), 70-90 (VSWL…LSMP), 91-111 (LILL…PVSF), 115-135 (LFYF…AVQD), 137-157 (LLFF…LAIW), 169-189 (FILY…AMGF), 210-230 (GFQL…LPIV), 244-264 (TAPV…YALL), 278-298 (FAPL…LTSF), 315-335 (MGFV…GAML), 336-356 (QMIS…ATYD), 377-397 (FALW…SGFV), 418-438 (VVIC…LLSM), and 465-485 (VYII…PKLM).

It belongs to the complex I subunit 4 family.

The protein localises to the cellular thylakoid membrane. It catalyses the reaction a plastoquinone + NADH + (n+1) H(+)(in) = a plastoquinol + NAD(+) + n H(+)(out). It carries out the reaction a plastoquinone + NADPH + (n+1) H(+)(in) = a plastoquinol + NADP(+) + n H(+)(out). In terms of biological role, NDH-1 shuttles electrons from NAD(P)H, via FMN and iron-sulfur (Fe-S) centers, to quinones in the respiratory chain. The immediate electron acceptor for the enzyme in this species is believed to be plastoquinone. Couples the redox reaction to proton translocation (for every two electrons transferred, four hydrogen ions are translocated across the cytoplasmic membrane), and thus conserves the redox energy in a proton gradient. This Synechococcus sp. (strain CC9605) protein is NAD(P)H-quinone oxidoreductase chain 4.